The primary structure comprises 324 residues: NADH-ubiquinone oxidoreductase chain 1 (324 aa).

8 helical membrane-spanning segments follow: residues 10-30 (MIMT…LTLV), 76-96 (FLFI…WIPL), 107-127 (LGLL…LWSG), 143-163 (VAQT…TIML), 178-198 (PIYL…STLA), 229-249 (LFFL…ITLF), 260-280 (ELFS…FLWV), and 300-320 (FLPL…SYAG).

It belongs to the complex I subunit 1 family.

The protein resides in the mitochondrion inner membrane. It catalyses the reaction a ubiquinone + NADH + 5 H(+)(in) = a ubiquinol + NAD(+) + 4 H(+)(out). In terms of biological role, core subunit of the mitochondrial membrane respiratory chain NADH dehydrogenase (Complex I) that is believed to belong to the minimal assembly required for catalysis. Complex I functions in the transfer of electrons from NADH to the respiratory chain. The immediate electron acceptor for the enzyme is believed to be ubiquinone. This chain is NADH-ubiquinone oxidoreductase chain 1 (MT-ND1), found in Excalfactoria chinensis (Blue-breasted quail).